Consider the following 661-residue polypeptide: uncharacterized protein (661 aa).

Helical transmembrane passes span 37–57 (VFLGLILALMVVVVALTLFLS), 87–107 (INSPAPWIGLVALAMAGAVFI), 120–140 (WLLLGVLLSLLFVVNGLNVIL), 158–178 (VFWQFLWIYGIVIVVAIPIIV), 243–263 (LLDILDSILTLISFTAILYTI), 266–286 (TLMWGLIGYAVFGTVVAIAIG), and 341–361 (FNLLIIWQALISLFQLGYNYF). In terms of domain architecture, ABC transmembrane type-1 spans 123-410 (LGVLLSLLFV…VTNQIQNITE (288 aa)). Positions 453 to 659 (VALENVTLSP…AEGRWQISPI (207 aa)) constitute an ABC transporter domain. 487–494 (GPSGSGKS) provides a ligand contact to ATP.

It belongs to the ABC transporter superfamily.

It is found in the cell inner membrane. This is an uncharacterized protein from Synechocystis sp. (strain ATCC 27184 / PCC 6803 / Kazusa).